The chain runs to 411 residues: Arginine deiminase (411 aa).

The Amidino-cysteine intermediate role is filled by C401.

This sequence belongs to the arginine deiminase family.

It is found in the cytoplasm. The catalysed reaction is L-arginine + H2O = L-citrulline + NH4(+). It functions in the pathway amino-acid degradation; L-arginine degradation via ADI pathway; carbamoyl phosphate from L-arginine: step 1/2. This chain is Arginine deiminase, found in Staphylococcus epidermidis (strain ATCC 35984 / DSM 28319 / BCRC 17069 / CCUG 31568 / BM 3577 / RP62A).